Reading from the N-terminus, the 239-residue chain is Phosphoribosylaminoimidazole-succinocarboxamide synthase (239 aa).

It belongs to the SAICAR synthetase family.

It catalyses the reaction 5-amino-1-(5-phospho-D-ribosyl)imidazole-4-carboxylate + L-aspartate + ATP = (2S)-2-[5-amino-1-(5-phospho-beta-D-ribosyl)imidazole-4-carboxamido]succinate + ADP + phosphate + 2 H(+). It functions in the pathway purine metabolism; IMP biosynthesis via de novo pathway; 5-amino-1-(5-phospho-D-ribosyl)imidazole-4-carboxamide from 5-amino-1-(5-phospho-D-ribosyl)imidazole-4-carboxylate: step 1/2. The polypeptide is Phosphoribosylaminoimidazole-succinocarboxamide synthase (Acinetobacter baylyi (strain ATCC 33305 / BD413 / ADP1)).